The primary structure comprises 292 residues: Probable 2-(5''-triphosphoribosyl)-3'-dephosphocoenzyme-A synthase (292 aa).

The protein belongs to the CitG/MdcB family.

The catalysed reaction is 3'-dephospho-CoA + ATP = 2'-(5''-triphospho-alpha-D-ribosyl)-3'-dephospho-CoA + adenine. Its function is as follows. Involved in the formation of 2-(5''-phosphoribosyl)-3'-dephosphocoenzyme-A, the prosthetic group of the acyl-carrier protein of the malonate decarboxylase. In Azotobacter vinelandii (strain DJ / ATCC BAA-1303), this protein is Probable 2-(5''-triphosphoribosyl)-3'-dephosphocoenzyme-A synthase.